The primary structure comprises 757 residues: MRERGEMREAKAPLIAEAAEHISHSHGSGSSGTGSHTSGGGGGWRGSRQYQRRSDALAYGNRYQKAAALVDLAEDGVGIPEDVLNDTRFERAMRFYFVYLRLDWLWSLNLFALILLNFLEKPLWCRGYSQHACDQRDLYFLGQLPYLSKTESLIYEGLTLVILVMDIFYPLSYEGLNLFWKNTINKLKVLLLFILACDILVFAFSPQPFRVAPYIRVAFLIMNIRELRMCAVTLVGMVGTYLNVLALSLLFLLFASWLAYVTFEDTPQGKTVFSSYGTTLYQMFILFTTSNNPDVWVPAYKSSRWSSLFFIVYVLLGVYFLTNLILAVIYDSFKEQLAKQVSQADCTRKSILEKAFGIIDATGQGYLNKEQCLSLLDELNKYRSLPKTSREDFELIFAELDQSGDFKVTSEEFATLCNTIAIKFQKEPPPSYLEKYPSFYHSALCEWLKSFVRSPLFEYIVIFVLLMNLVAVIIETTLDIENSSSQKVWQEVEFVFGWIYVIEMALKIFSLGFGAYWMEGQNKFDFVLTWTIFIGETLTFAFPSKLSFLSNGEWIRYLLLGRMLRLTRILLQVRRFRAFVATFFTLMSSLMPYLGIVFCTLCIYCSLGLQIFGGIVYAGNPTLEETDLFSNDYLLFNFNDYPSGMVTLFNLLVMGNWQAWMESYRQLTGSYWSLIYFVSFYLISVLLLLNLIVAFVLEAFFAEMELEKDGEADIQDPTLEGRNRRRSVRVRTKGTMVDILLHHMLSNELDGSQNRDQ.

Topologically, residues 1-94 (MRERGEMREA…NDTRFERAMR (94 aa)) are cytoplasmic. The tract at residues 24 to 48 (HSHGSGSSGTGSHTSGGGGGWRGSR) is disordered. The segment covering 29–45 (GSSGTGSHTSGGGGGWR) has biased composition (gly residues). Residues 95 to 115 (FYFVYLRLDWLWSLNLFALIL) form a helical membrane-spanning segment. The Extracellular segment spans residues 116–152 (LNFLEKPLWCRGYSQHACDQRDLYFLGQLPYLSKTES). Residues 153-173 (LIYEGLTLVILVMDIFYPLSY) form a helical membrane-spanning segment. Topologically, residues 174–188 (EGLNLFWKNTINKLK) are cytoplasmic. A helical transmembrane segment spans residues 189-209 (VLLLFILACDILVFAFSPQPF). Arg-210 is a topological domain (extracellular). The helical; Voltage-sensor transmembrane segment at 211–228 (VAPYIRVAFLIMNIRELR) threads the bilayer. The Cytoplasmic segment spans residues 229–233 (MCAVT). A helical transmembrane segment spans residues 234–254 (LVGMVGTYLNVLALSLLFLLF). Residues 255–270 (ASWLAYVTFEDTPQGK) are Extracellular-facing. The pore-forming intramembrane region spans 271–285 (TVFSSYGTTLYQMFI). Residues 286–308 (LFTTSNNPDVWVPAYKSSRWSSL) are Extracellular-facing. The helical transmembrane segment at 309 to 329 (FFIVYVLLGVYFLTNLILAVI) threads the bilayer. The Cytoplasmic portion of the chain corresponds to 330 to 453 (YDSFKEQLAK…LCEWLKSFVR (124 aa)). EF-hand domains follow at residues 347–382 (TRKSILEKAFGIIDATGQGYLNKEQCLSLLDELNKY) and 388–423 (TSREDFELIFAELDQSGDFKVTSEEFATLCNTIAIK). The chain crosses the membrane as a helical span at residues 454-474 (SPLFEYIVIFVLLMNLVAVII). Residues 475–493 (ETTLDIENSSSQKVWQEVE) lie on the Extracellular side of the membrane. Residue Asn-482 is glycosylated (N-linked (GlcNAc...) asparagine). A helical transmembrane segment spans residues 494 to 514 (FVFGWIYVIEMALKIFSLGFG). The Cytoplasmic segment spans residues 515–523 (AYWMEGQNK). Residues 524–544 (FDFVLTWTIFIGETLTFAFPS) traverse the membrane as a helical segment. The Extracellular segment spans residues 545–553 (KLSFLSNGE). Residues 554–571 (WIRYLLLGRMLRLTRILL) traverse the membrane as a helical; Voltage-sensor segment. Residues 572 to 595 (QVRRFRAFVATFFTLMSSLMPYLG) are Cytoplasmic-facing. A helical transmembrane segment spans residues 596–616 (IVFCTLCIYCSLGLQIFGGIV). At 617–640 (YAGNPTLEETDLFSNDYLLFNFND) the chain is on the extracellular side. The pore-forming intramembrane region spans 641 to 655 (YPSGMVTLFNLLVMG). Residues 656–676 (NWQAWMESYRQLTGSYWSLIY) lie on the Extracellular side of the membrane. The chain crosses the membrane as a helical span at residues 677 to 697 (FVSFYLISVLLLLNLIVAFVL). Over 698–757 (EAFFAEMELEKDGEADIQDPTLEGRNRRRSVRVRTKGTMVDILLHHMLSNELDGSQNRDQ) the chain is Cytoplasmic.

The protein belongs to the calcium channel alpha-1 subunit (TC 1.A.1.11) family. Two pore calcium channel subfamily. In terms of assembly, homodimer. As to expression, expressed in shoot, mature leaf, cultured cells, and at lower level in roots.

It is found in the membrane. Inhibited by the VDCC blocker verapamil in yeast cells. Channel activity may be down-regulated by cytosolic Ca(2+) in rice cells. Inhibited by Al(3+). May function as one of the major voltage-gated Ca(2+) channel (VDCC) across the plasma membrane. May be involved in the regulation of cytosolic Ca(2+) and in growth and development. Acts as the major ROS-responsive Ca(2+) channel and is the possible target of Al-dependent inhibition. Determines sensitivity to T.viride xylanase elicitor. Plays a regulatory role in elicitor-induced defense responses and hypersensitive cell death. The protein is Two pore calcium channel protein 1 (TPC1) of Oryza sativa subsp. japonica (Rice).